The primary structure comprises 78 residues: Large ribosomal subunit protein uL10 (78 aa).

Positions 40-50 (AAAAAATAPAA) are enriched in low complexity. The tract at residues 40–78 (AAAAAATAPAAETKKEEKKEEKKEETEESDDDIGLSLFH) is disordered. Basic and acidic residues predominate over residues 51–64 (ETKKEEKKEEKKEE).

This sequence belongs to the universal ribosomal protein uL10 family. P0 forms a pentameric complex by interaction with dimers of P1 and P2.

The protein resides in the nucleus. It localises to the cytoplasm. Functionally, ribosomal protein P0 is the functional equivalent of E.coli protein L10. The protein is Large ribosomal subunit protein uL10 of Culicoides nubeculosus (Biting midge).